The sequence spans 305 residues: Translation initiation factor eIF2B subunit alpha (305 aa).

Residue K35 is modified to N6-acetyllysine.

It belongs to the eIF-2B alpha/beta/delta subunits family. Component of the translation initiation factor 2B (eIF2B) complex which is a heterodecamer of two sets of five different subunits: alpha, beta, gamma, delta and epsilon. Subunits alpha, beta and delta comprise a regulatory subcomplex and subunits epsilon and gamma comprise a catalytic subcomplex. Within the complex, the hexameric regulatory complex resides at the center, with the two heterodimeric catalytic subcomplexes bound on opposite sides.

The protein localises to the cytoplasm. The protein resides in the cytosol. With respect to regulation, activated by the chemical integrated stress response (ISR) inhibitor ISRIB which stimulates guanine nucleotide exchange factor activity for both phosphorylated and unphosphorylated eIF2. Acts as a component of the translation initiation factor 2B (eIF2B) complex, which catalyzes the exchange of GDP for GTP on eukaryotic initiation factor 2 (eIF2) gamma subunit. Its guanine nucleotide exchange factor activity is repressed when bound to eIF2 complex phosphorylated on the alpha subunit, thereby limiting the amount of methionyl-initiator methionine tRNA available to the ribosome and consequently global translation is repressed. The sequence is that of Translation initiation factor eIF2B subunit alpha (EIF2B1) from Macaca fascicularis (Crab-eating macaque).